The primary structure comprises 230 residues: Octanoyltransferase (230 aa).

The 178-residue stretch at 38 to 215 folds into the BPL/LPL catalytic domain; it reads AGGADTLLLL…AVCAALDGVL (178 aa). Substrate contacts are provided by residues 76 to 83, 145 to 147, and 158 to 160; these read RGGKITWH, AIG, and GFA. Cys176 (acyl-thioester intermediate) is an active-site residue.

This sequence belongs to the LipB family.

It is found in the cytoplasm. The catalysed reaction is octanoyl-[ACP] + L-lysyl-[protein] = N(6)-octanoyl-L-lysyl-[protein] + holo-[ACP] + H(+). The protein operates within protein modification; protein lipoylation via endogenous pathway; protein N(6)-(lipoyl)lysine from octanoyl-[acyl-carrier-protein]: step 1/2. Catalyzes the transfer of endogenously produced octanoic acid from octanoyl-acyl-carrier-protein onto the lipoyl domains of lipoate-dependent enzymes. Lipoyl-ACP can also act as a substrate although octanoyl-ACP is likely to be the physiological substrate. This is Octanoyltransferase from Mycobacterium bovis (strain BCG / Tokyo 172 / ATCC 35737 / TMC 1019).